A 443-amino-acid chain; its full sequence is ATP-dependent protease ATPase subunit HslU (443 aa).

Residues Ile18 and 60–65 (GVGKTE) contribute to the ATP site. The interval 141 to 165 (DQWGQNEENDTDSSTRQSFRKKLRE) is disordered. The ATP site is built by Asp256, Glu321, and Arg393.

Belongs to the ClpX chaperone family. HslU subfamily. In terms of assembly, a double ring-shaped homohexamer of HslV is capped on each side by a ring-shaped HslU homohexamer. The assembly of the HslU/HslV complex is dependent on binding of ATP.

Its subcellular location is the cytoplasm. Functionally, ATPase subunit of a proteasome-like degradation complex; this subunit has chaperone activity. The binding of ATP and its subsequent hydrolysis by HslU are essential for unfolding of protein substrates subsequently hydrolyzed by HslV. HslU recognizes the N-terminal part of its protein substrates and unfolds these before they are guided to HslV for hydrolysis. In Photobacterium profundum (strain SS9), this protein is ATP-dependent protease ATPase subunit HslU.